We begin with the raw amino-acid sequence, 165 residues long: Cytochrome c-type biogenesis protein CcmE (165 aa).

At 1 to 7 (MTRKQKR) the chain is on the cytoplasmic side. Residues 8 to 28 (LAIIGGGMSFIVAAVLLVMFA) form a helical; Signal-anchor for type II membrane protein membrane-spanning segment. Residues 29 to 165 (FGQSIAYFYM…ASGDKTGATK (137 aa)) are Periplasmic-facing. Residues His-123 and Tyr-127 each contribute to the heme site. A disordered region spans residues 138–165 (DKGLWQQGAEGAAPAASAASGDKTGATK). The segment covering 145 to 158 (GAEGAAPAASAASG) has biased composition (low complexity).

This sequence belongs to the CcmE/CycJ family.

It localises to the cell inner membrane. In terms of biological role, heme chaperone required for the biogenesis of c-type cytochromes. Transiently binds heme delivered by CcmC and transfers the heme to apo-cytochromes in a process facilitated by CcmF and CcmH. This is Cytochrome c-type biogenesis protein CcmE from Agrobacterium fabrum (strain C58 / ATCC 33970) (Agrobacterium tumefaciens (strain C58)).